We begin with the raw amino-acid sequence, 206 residues long: N-(5'-phosphoribosyl)anthranilate isomerase (206 aa).

Belongs to the TrpF family.

It catalyses the reaction N-(5-phospho-beta-D-ribosyl)anthranilate = 1-(2-carboxyphenylamino)-1-deoxy-D-ribulose 5-phosphate. The protein operates within amino-acid biosynthesis; L-tryptophan biosynthesis; L-tryptophan from chorismate: step 3/5. This Chlamydia felis (strain Fe/C-56) (Chlamydophila felis) protein is N-(5'-phosphoribosyl)anthranilate isomerase.